Here is a 461-residue protein sequence, read N- to C-terminus: Photosystem II CP43 reaction center protein (461 aa).

5 helical membrane-spanning segments follow: residues 57–81 (LFEV…SHLA), 122–143 (LRGP…KDKN), 166–188 (KAMF…RIIS), 243–263 (KPFG…LSYS), and 279–300 (WYNN…ASQS). E355 lines the [CaMn4O5] cluster pocket. The chain crosses the membrane as a helical span at residues 435–459 (RARAAAAGFEKGIDRATEPVLAMRD).

It belongs to the PsbB/PsbC family. PsbC subfamily. PSII is composed of 1 copy each of membrane proteins PsbA, PsbB, PsbC, PsbD, PsbE, PsbF, PsbH, PsbI, PsbJ, PsbK, PsbL, PsbM, PsbT, PsbX, PsbY, PsbZ, Psb30/Ycf12, peripheral proteins PsbO, CyanoQ (PsbQ), PsbU, PsbV and a large number of cofactors. It forms dimeric complexes. It depends on Binds multiple chlorophylls and provides some of the ligands for the Ca-4Mn-5O cluster of the oxygen-evolving complex. It may also provide a ligand for a Cl- that is required for oxygen evolution. PSII binds additional chlorophylls, carotenoids and specific lipids. as a cofactor.

The protein localises to the cellular thylakoid membrane. Its function is as follows. One of the components of the core complex of photosystem II (PSII). It binds chlorophyll and helps catalyze the primary light-induced photochemical processes of PSII. PSII is a light-driven water:plastoquinone oxidoreductase, using light energy to abstract electrons from H(2)O, generating O(2) and a proton gradient subsequently used for ATP formation. The sequence is that of Photosystem II CP43 reaction center protein from Synechococcus elongatus (strain ATCC 33912 / PCC 7942 / FACHB-805) (Anacystis nidulans R2).